The following is a 478-amino-acid chain: Ribosomal RNA small subunit methyltransferase F (478 aa).

Residues 126–132, E150, D177, and D195 each bind S-adenosyl-L-methionine; that span reads AAAPGSK. C248 acts as the Nucleophile in catalysis.

The protein belongs to the class I-like SAM-binding methyltransferase superfamily. RsmB/NOP family.

It is found in the cytoplasm. The catalysed reaction is cytidine(1407) in 16S rRNA + S-adenosyl-L-methionine = 5-methylcytidine(1407) in 16S rRNA + S-adenosyl-L-homocysteine + H(+). Specifically methylates the cytosine at position 1407 (m5C1407) of 16S rRNA. The chain is Ribosomal RNA small subunit methyltransferase F from Erwinia tasmaniensis (strain DSM 17950 / CFBP 7177 / CIP 109463 / NCPPB 4357 / Et1/99).